The sequence spans 5412 residues: Mucin-4 (5412 aa).

The signal sequence occupies residues 1–28 (MKGARWRRVPWVSLSCLCLCLLPHVVPG). Disordered stretches follow at residues 40 to 87 (TAAP…TTSK) and 142 to 249 (TSTD…ATSS). The tract at residues 43–4241 (PVTSTGSTTA…SVSTGHATPL (4199 aa)) is variable number of tandem repeats (VNTR). Residues 142–163 (TSTDSTLGNTEETSTAGTESST) are compositionally biased toward low complexity. Residues T154 and T156 are each glycosylated (O-linked (GalNAc...) threonine). The segment covering 164 to 199 (PVTSAVSITAGQEGQSRTTSWRTSIQDTSASSQNHW) has biased composition (polar residues). A compositionally biased stretch (low complexity) spans 200–223 (TRSTQTTRESQTSTLTHRTTSTPS). Polar residues predominate over residues 224–249 (FSPSVHNVTGTVSQKTSPSGETATSS). N230 carries an N-linked (GlcNAc...) asparagine glycan. An O-linked (GalNAc...) threonine glycan is attached at T234. N-linked (GlcNAc...) asparagine glycosylation is present at N255. 3 stretches are compositionally biased toward polar residues: residues 267 to 285 (TTST…SVPV), 306 to 328 (SPAT…HQTQ), and 358 to 367 (GFNPSGTVSQ). Disordered stretches follow at residues 267–286 (TTST…VPVT), 303–328 (EGQS…HQTQ), 353–383 (LSSP…PSSV), 438–473 (LSPS…SFSP), 488–580 (WPSS…ALLS), 592–853 (TATS…ASAS), 868–963 (VPGT…SGSG), 983–1864 (SSAS…DASS), 1878–2078 (ASSV…TGHA), 2111–2220 (TALH…ASTG), 2232–2814 (SAST…TGHA), 2837–3306 (IPSS…SSVS), 3320–3580 (SAST…VSTG), 3592–3644 (SVST…VSTG), 3656–3756 (SVST…ASTG), and 3769–4223 (VSTG…GHAT). O-linked (GalNAc...) threonine glycans are attached at residues T364, T369, and T376. Residues 368 to 383 (ETFPSGETTTSSPSSV) show a composition bias toward low complexity. Polar residues-rich tracts occupy residues 450–459 (AFHTQQSEGA), 488–526 (WPSS…TGTA), and 546–557 (TTYSSHSTTLPK). 2 stretches are compositionally biased toward low complexity: residues 558–577 (TTGA…TGEA) and 615–627 (STNH…TSTS). Residue N617 is glycosylated (N-linked (GlcNAc...) asparagine). O-linked (GalNAc...) threonine glycans are attached at residues T620, T666, and T688. Positions 628–677 (PQESPAVSQRGHTQAPQTTQESQTTRSVSPMTDTKTVTTPGSSFTASGHS) are enriched in polar residues. A compositionally biased stretch (low complexity) spans 705-717 (TTQAPTTALQAAP). Over residues 729–746 (GTSLSKTGALTLANSVVS) the composition is skewed to polar residues. The O-linked (GalNAc...) threonine glycan is linked to T747. Residues 756–771 (TSASASTSPDTAAAMT) are compositionally biased toward low complexity. Over residues 772–789 (HTHQAESTEASGQTQTSE) the composition is skewed to polar residues. Residues 790-828 (PASSGSRTTSAGTATPSSSGASGTTPSGSEGISTSGETT) show a composition bias toward low complexity. O-linked (GalNAc...) threonine glycosylation is found at T797, T798, T802, T804, T813, and T814. Residues 829 to 852 (RFSSNPSRDSHTTQSTTELLSASA) show a composition bias toward polar residues. T881, T886, and T892 each carry an O-linked (GalNAc...) threonine glycan. Residues 885–903 (PTGQSSPTSPSASPQETAA) show a composition bias toward low complexity. Positions 907–928 (MAQTQRTRTSRGSDTISLASQA) are enriched in polar residues. Low complexity predominate over residues 929–950 (TDTFSTVPPTPPSITSTGLTSP). Residues T931, T934, T938, T943, T945, T948, T952, T954, T1003, T1007, T1012, T1019, T1022, T1023, T1028, T1030, T1035, T1039, T1044, T1051, T1055, T1060, T1062, T1067, T1071, T1076, T1083, T1086, T1087, T1092, T1094, T1099, T1103, T1108, T1110, T1115, T1118, T1119, T1124, T1126, T1131, T1135, T1172, T1179, T1182, T1183, T1188, T1195, T1199, T1204, T1236, T1243, T1246, and T1247 are each glycosylated (O-linked (GalNAc...) threonine). A compositionally biased stretch (polar residues) spans 951–963 (QTETHTLSPSGSG). Residues 1007-1024 (TPLPVTSPSSVSTGHTTP) are compositionally biased toward low complexity. The segment covering 1028 to 1054 (TDTSSESTGHVTPLPVTSFSSASTGDS) has biased composition (polar residues). The segment covering 1060 to 1086 (TDTSSASTGHVTPLPVTSLSSASTGDT) has biased composition (polar residues). Residues 1092–1118 (TDTSSASTGHATSLPVTDTSSVSTGHT) are compositionally biased toward polar residues. Polar residues-rich tracts occupy residues 1124 to 1150 (TDTS…TGHT) and 1157 to 1197 (DASS…STGH). Composition is skewed to polar residues over residues 1204–1213 (TDTSSASTGH) and 1221–1246 (DASS…TGHT). The span at 1252 to 1262 (TDTSSASTGQA) shows a compositional bias: polar residues. Low complexity predominate over residues 1263–1279 (TSLLVTDTSSVSTGDTT). O-linked (GalNAc...) threonine glycans are attached at residues T1278, T1279, T1284, T1286, T1291, T1295, T1300, T1307, T1311, T1316, T1323, T1326, T1332, T1339, T1342, T1343, and T1348. Polar residues predominate over residues 1281 to 1325 (LPVTSTSSASTGHVTPLHVTSPSSASTGHATPLPVTSLSSASTGD). The segment covering 1332–1342 (TSPSSASTGDT) has biased composition (polar residues). 2 stretches are compositionally biased toward polar residues: residues 1349 to 1358 (DASSVSTGHT) and 1365 to 1405 (DASS…STGH). T1380, T1387, T1390, T1391, T1396, T1403, T1407, T1412, T1444, T1451, T1454, and T1455 each carry an O-linked (GalNAc...) threonine glycan. 2 stretches are compositionally biased toward polar residues: residues 1412–1421 (TDTSSASTGH) and 1429–1454 (DASS…TGHT). Residues 1460–1470 (TDTSSASTGQA) show a composition bias toward polar residues. A compositionally biased stretch (low complexity) spans 1471-1487 (TSLLVTDTSSVSTGDTT). O-linked (GalNAc...) threonine glycans are attached at residues T1486, T1487, T1492, T1494, T1499, T1503, T1508, T1515, T1519, T1524, T1531, T1534, T1540, T1547, T1550, T1551, T1556, T1563, T1566, T1567, T1572, T1579, T1582, T1583, T1588, T1590, T1598, T1599, T1604, T1611, T1614, T1615, T1620, T1622, T1627, and T1630. Positions 1489–1533 (LPVTSTSSASTGHVTPLHVTSPSSASTGHATPLPVTSLSSASTGD) are enriched in polar residues. Positions 1540–1550 (TSPSSASTGDT) are enriched in polar residues. The span at 1557–1582 (DASSVSTGHTTPLPVTSPSSASTGHT) shows a compositional bias: polar residues. Over residues 1588 to 1614 (TDTSSASKGDTTPLPVTSPSSASTGHT) the composition is skewed to polar residues. A compositionally biased stretch (low complexity) spans 1620-1631 (TDTSSASTGDTT). Residues 1633 to 1661 (LPVTNASSLSTGHATPLHVTSPSSASTGH) are compositionally biased toward polar residues. N1637 carries N-linked (GlcNAc...) asparagine glycosylation. T1659, T1663, T1668, T1670, T1675, T1679, T1716, T1723, T1726, T1727, T1732, T1764, T1766, T1812, T1819, T1822, T1823, T1828, T1835, T1838, T1839, T1844, T1854, and T1855 each carry an O-linked (GalNAc...) threonine glycan. Residues 1668–1679 (TSTSSASTGHAT) show a composition bias toward low complexity. Composition is skewed to polar residues over residues 1701–1741 (DVSS…STGH), 1749–1773 (DASS…STAH), and 1812–1822 (TSPSSASTGDT). Residues 1828–1840 (TDASSASTGDTTS) are compositionally biased toward low complexity. Composition is skewed to polar residues over residues 1841–1864 (LPVT…DASS), 1892–1902 (TDTNSASTGDT), and 1909–1950 (DASS…SGHT). 44 O-linked (GalNAc...) threonine glycosylation sites follow: T1931, T1934, T1935, T1940, T1950, T1951, T1956, T1963, T1995, T1999, T2004, T2006, T2015, T2020, T2027, T2030, T2031, T2036, T2038, T2047, T2052, T2062, T2063, T2132, T2137, T2139, T2142, T2143, T2148, T2150, T2155, T2159, T2164, T2180, T2182, T2187, T2191, T2196, T2198, T2203, T2207, T2244, T2254, and T2255. Polar residues predominate over residues 1957 to 1981 (DASSVPTGHATSLPVTDASSVSTGH). Over residues 2004–2030 (TDTSSVSTGQATPLPVTSLSSASTGDT) the composition is skewed to polar residues. A compositionally biased stretch (polar residues) spans 2036–2077 (TDTSSASTGQDTPLPVTSLSSVSTGDTTPLPVTNPSSASTGH). Low complexity predominate over residues 2125-2146 (DTTPLPVTSPSSTSTGDTTPLP). Polar residues predominate over residues 2148 to 2189 (TETSSVSTGHATSLPVTDTSSASTGHATSLPVTDTSSASTGH). Polar residues-rich tracts occupy residues 2196–2219 (TDTS…SAST) and 2232–2254 (SAST…TGDT). The span at 2261–2270 (DASSVSTGHA) shows a compositional bias: polar residues. A compositionally biased stretch (low complexity) spans 2271–2283 (TSLPVTSLSSVST). O-linked (GalNAc...) threonine glycosylation is found at T2283, T2286, T2287, T2292, T2299, T2303, T2308, T2324, T2331, T2334, T2335, T2340, T2347, T2351, T2356, T2363, T2366, T2367, T2372, T2382, T2383, T2388, T2395, T2398, T2399, and T2406. Over residues 2284 to 2301 (GDTTPLPVTSPSSASTGH) the composition is skewed to polar residues. The span at 2309–2349 (DASSASTGHATPLPVTSLSSASTGDTTPLPVTSPSSASTGH) shows a compositional bias: polar residues. Over residues 2366-2399 (TTPLPVTSSSSASSGHTTPLPVTDASSASTGDTT) the composition is skewed to low complexity. Composition is skewed to polar residues over residues 2404 to 2413 (TDTSSASTGH) and 2421 to 2445 (GLSS…STGH). N2437 is a glycosylation site (N-linked (GlcNAc...) asparagine). 14 O-linked (GalNAc...) threonine glycosylation sites follow: T2452, T2454, T2459, T2462, T2463, T2468, T2500, T2507, T2510, T2511, T2516, T2518, T2523, and T2526. Residues 2452 to 2471 (TSTSSASTGDTTPLPGTDTS) are compositionally biased toward low complexity. Polar residues predominate over residues 2485 to 2510 (DASSVSTGDTTRLPVTSPSSASTGHT). The span at 2517–2573 (DTPSASTGDTTPLPVTNASSLSTRHATSLHVTSPSSASTGHATSLPVTDTSAASTGH) shows a compositional bias: polar residues. N-linked (GlcNAc...) asparagine glycosylation occurs at N2533. O-linked (GalNAc...) threonine glycans are attached at residues T2564, T2566, T2571, T2575, T2580, T2582, T2587, T2590, T2591, T2596, T2598, T2619, T2622, T2623, T2628, T2660, T2667, T2670, T2671, T2676, T2683, T2687, T2692, and T2694. The segment covering 2580–2591 (TSTSSASTGDTT) has biased composition (low complexity). Composition is skewed to polar residues over residues 2597–2637 (DTYS…STGH) and 2645–2691 (DASS…SLPV). Over residues 2692–2704 (TDTSSASTGDTTS) the composition is skewed to low complexity. Polar residues predominate over residues 2705-2723 (LPVTDTSSAYTGDTTSLPV). The span at 2724 to 2735 (TDTSSSSTGDTT) shows a compositional bias: low complexity. Residues T2740, T2742, T2750, T2751, T2756, T2758, T2763, and T2767 are each glycosylated (O-linked (GalNAc...) threonine). Positions 2740–2750 (TETSSVSTGDT) are enriched in polar residues. Positions 2756–2798 (TDTSSASTGHATPLPVTNTSSVSTGHATPLHVTSPSSASTGHT) are enriched in polar residues. N-linked (GlcNAc...) asparagine glycosylation occurs at N2773. O-linked (GalNAc...) threonine glycosylation is found at T2779, T2783, T2788, T2795, T2798, T2799, and T2804. Composition is skewed to polar residues over residues 2805-2814 (DASSVSTGHA) and 2837-2846 (IPSSASSGHT). 3 O-linked (GalNAc...) threonine glycosylation sites follow: T2846, T2847, and T2852. Positions 2853–2877 (DASSVSTGHATSLPVTDASSVSTGH) are enriched in polar residues. Residues 2895 to 2907 (TPLPLTSLSSVST) are compositionally biased toward low complexity. T2910, T2911, T2916, T2918, T2923, T2927, T2932, T2939, T2942, T2943, T2948, T2950, T2955, T2959, T2966, T2971, and T2975 each carry an O-linked (GalNAc...) threonine glycan. Residues 2916–2942 (TDTSSASTGQATPLPVTSLSSVSTGDT) show a composition bias toward polar residues. Residues 2948-2973 (TDTSSASTGHATSLPVTDTSSASTGH) are compositionally biased toward polar residues. 2 stretches are compositionally biased toward polar residues: residues 2980–2989 (TDTSSASTGH) and 3009–3037 (LPVT…STGH). T3023, T3028, T3035, and T3039 each carry an O-linked (GalNAc...) threonine glycan. A compositionally biased stretch (polar residues) spans 3044–3069 (TDTSSASTGHANPLHVTSPSSASTGH). T3071, T3076, T3078, T3083, T3087, T3092, T3099, T3102, T3103, T3108, T3115, T3118, T3119, T3124, T3126, T3131, T3135, T3140, T3142, T3147, T3150, T3151, T3156, T3158, T3163, T3167, T3172, T3179, T3182, T3183, T3188, T3220, T3227, T3230, T3231, T3236, T3243, T3247, T3252, and T3254 each carry an O-linked (GalNAc...) threonine glycan. Over residues 3076–3118 (TDTSSASTGHATPLPVTSLSSVSTGDTTPLPVTSPSSASTGHT) the composition is skewed to polar residues. Positions 3124-3134 (TDTSSASTGQA) are enriched in polar residues. Over residues 3140 to 3151 (TSTSSASTGDTT) the composition is skewed to low complexity. 2 stretches are compositionally biased toward polar residues: residues 3156–3197 (TDTS…STGH) and 3205–3251 (DASS…SLPV). Over residues 3252–3264 (TDTSSASTGDTTS) the composition is skewed to low complexity. Over residues 3265–3283 (LPVTDTSSAYTGDTTSLPV) the composition is skewed to polar residues. Residues 3284–3295 (TDTSSSSTGDTT) are compositionally biased toward low complexity. 9 O-linked (GalNAc...) threonine glycosylation sites follow: T3294, T3332, T3339, T3342, T3343, T3348, T3350, T3355, and T3359. The span at 3320-3337 (SASTGHATPLHVTSPSSA) shows a compositional bias: polar residues. Low complexity predominate over residues 3338–3356 (STGDTTPVPVTDTSSVSTG). Composition is skewed to polar residues over residues 3365 to 3374 (GLSSASTGDT) and 3381 to 3405 (DISS…STGD). N3397 carries N-linked (GlcNAc...) asparagine glycosylation. O-linked (GalNAc...) threonine glycosylation is found at T3398, T3403, T3406, T3412, T3419, T3423, T3428, T3430, T3435, T3439, and T3444. Over residues 3412-3421 (TSPSSASTGH) the composition is skewed to polar residues. Positions 3428–3471 (TSTSSASTGHATPVPVTSTSSASTGHTTPLPVTDTSSASTGDTT) are enriched in low complexity. A glycan (O-linked (GalNAc...) serine) is linked at S3445. Residues T3446, T3451, T3454, T3455, T3460, T3462, T3467, T3470, T3471, T3476, T3483, T3486, T3487, T3492, T3499, T3502, T3504, T3508, T3515, T3519, T3524, T3526, T3531, T3535, T3540, T3547, T3550, T3551, T3556, T3567, T3614, T3615, T3622, T3678, T3679, T3686, T3691, T3695, T3700, T3710, T3711, T3716, T3718, T3723, T3727, T3732, T3739, T3743, T3748, T3780, T3787, T3790, T3791, T3796, T3798, T3803, T3807, T3812, T3822, T3823, T3828, T3835, T3839, T3844, T3851, T3854, T3860, T3867, T3871, T3876, T3883, T3886, T3887, T3892, T3894, T3899, T3903, T3935, T3940, T3942, T3947, T3950, T3951, T3956, T3958, T3963, T3967, T3972, T3979, T3983, T3988, T3990, T3995, T3999, T4004, T4006, T4011, T4015, and T4020 are each glycosylated (O-linked (GalNAc...) threonine). A compositionally biased stretch (polar residues) spans 3473–3486 (LPVTSPSSASTGHT). The segment covering 3493–3517 (IPSSASTGDTSTLPVTGASSASTGH) has biased composition (polar residues). A compositionally biased stretch (polar residues) spans 3524–3550 (TDTSSVSTGHATPLPVTSLSSVSTGDT). The span at 3557–3580 (DASSASTGQATPLPVTSLSSVSTG) shows a compositional bias: polar residues. A compositionally biased stretch (low complexity) spans 3604–3615 (TDTSSASTGDTT). Polar residues predominate over residues 3620–3644 (TDTSSASTGQATPLPVTSLSSVSTG). Low complexity predominate over residues 3668 to 3679 (TDTSSASTGDTT). Residues 3684-3694 (TDTSSASTGQA) are compositionally biased toward polar residues. Over residues 3710–3728 (TTPLPVTSTSSVSTGHVTP) the composition is skewed to low complexity. Positions 3730–3741 (HVTSPSSASTGH) are enriched in polar residues. Residues 3780-3791 (TDASSASTGDTT) show a composition bias toward low complexity. Positions 3796–3822 (TDTSSASTGQATPLPVTSLSSVSTGDT) are enriched in polar residues. A compositionally biased stretch (polar residues) spans 3860–3869 (TSPSSASTGH). The span at 3877–3886 (GLSSASTGDT) shows a compositional bias: polar residues. The segment covering 3892-3901 (TDTSSASTRH) has biased composition (polar residues). The segment covering 3940-3951 (TSTSSASTGDTT) has biased composition (low complexity). Residues 3956-3981 (TDTSSVSTGHATSLPVTSRSSASTGH) are compositionally biased toward polar residues. Polar residues predominate over residues 3988–3997 (TDTSSVSTGH). The segment covering 3999–4011 (TPLPVTSTSSVST) has biased composition (low complexity). Polar residues predominate over residues 4018-4029 (PVTSPSSASTGH). S4021, S4023, S4024, and S4026 each carry an O-linked (GalNAc...) serine glycan. O-linked (GalNAc...) threonine glycosylation is found at T4027, T4031, and T4036. Positions 4030 to 4047 (ATPVPVTSTSSASTGDTT) are enriched in low complexity. O-linked (GalNAc...) serine glycosylation is present at S4037. T4038, T4043, T4046, and T4047 each carry an O-linked (GalNAc...) threonine glycan. Residues 4049-4093 (LPVTNASSLSTGHATPLHVTSPSSASRGDTSTLPVTDASSASTGH) show a composition bias toward polar residues. N4053 carries an N-linked (GlcNAc...) asparagine glycan. O-linked (GalNAc...) threonine glycosylation is found at T4078 and T4084. Residues 4095–4107 (TPLPLTSLSSVST) show a composition bias toward low complexity. O-linked (GalNAc...) threonine glycans are attached at residues T4110, T4111, T4116, T4118, T4123, T4127, T4132, T4139, T4142, T4143, T4148, T4158, T4159, T4164, T4171, T4175, T4180, T4182, T4187, T4190, T4191, T4196, T4198, T4203, T4207, T4212, T4214, T4219, T4223, and T4239. A compositionally biased stretch (polar residues) spans 4116–4142 (TDTSSASTGQATPLPVTSLSSVSTGDT). The segment covering 4149–4173 (IPSSASSGHTTSLPVTDASSVSTGH) has biased composition (polar residues). The span at 4180 to 4191 (TSTSSASTGDTT) shows a compositional bias: low complexity. The span at 4196–4205 (TDTSSASTGH) shows a compositional bias: polar residues. Over residues 4212 to 4223 (TDTSSASTGHAT) the composition is skewed to polar residues. Positions 4242–4254 (AVSSATSASTVSS) are enriched in low complexity. Residues 4242 to 4288 (AVSSATSASTVSSDSPLKMETPGMTTPSLKTDGGRRTATSPPPTTSQ) are disordered. 6 O-linked (GalNAc...) threonine glycosylation sites follow: T4272, T4278, T4280, T4289, T4293, and T4297. Positions 4397-4552 (PFWDDADFST…GLQFYRLHRE (156 aa)) constitute an NIDO domain. The AMOP domain maps to 4553 to 4668 (ERPNYRLECL…YLCALYQQRR (116 aa)). The region spanning 4680 to 4880 (QPAWMFGDPH…TWQINGTGLL (201 aa)) is the VWFD domain. N-linked (GlcNAc...) asparagine glycosylation is found at N4715, N4768, N4787, N4796, N4831, N4852, N4875, N4902, N4928, N4946, N4982, N4997, N5045, N5052, N5100, and N5119. An EGF-like 1 domain is found at 5118–5157 (QNQSCPVNYCYNQGHCYISQTLGCQPMCTCPPAFTDSRCF). Disulfide bonds link C5122–C5133, C5127–C5145, and C5147–C5156. N-linked (GlcNAc...) asparagine glycosylation is found at N5185, N5192, and N5292. Residues 5321-5360 (VSPCSRGYCDHGGQCQHLPSGPRCSCVSFSIYTAWGEHCE) enclose the EGF-like 2 domain. Intrachain disulfides connect C5324–C5335, C5329–C5344, and C5346–C5359. Residues 5369-5389 (FFGIFFGALGGLLLLGVGTFV) traverse the membrane as a helical segment.

As to quaternary structure, a heterodimeric complex, composed of a mucin-4 alpha chain and a cysteine-rich transmembrane mucin-4 beta chain. Mucin-4 beta chain interacts with ERBB2 via the EGF-like domain 1. In nonpolarized cells, associates with ERBB2 and ERBB3. In terms of processing, proteolytically cleaved into 2 chains, mucin-4 alpha chain and mucin-4 beta chain. Highly O-glycosylated. Post-translationally, is predominantly N-glycosylated. Expressed in the thymus, thyroid, lung, trachea, esophagus, stomach, small intestine, colon, testis, prostate, ovary, uterus, placenta, and mammary and salivary glands. Expressed in carcinomas arising from some of these epithelia, such as lung cancers, squamous cell carcinomas of the upper aerodigestive tract, mammary carcinomas, biliary tract, colon, and cervix cancers. Minimally or not expressed in the normal pancreas or chronic pancreatitis, but is highly expressed in pancreatic tumors and pancreatic tumor cell lines.

The protein localises to the cell membrane. It is found in the secreted. In terms of biological role, membrane-bound mucin, a family of highly glycosylated proteins that constitute the major component of the mucus, the slimy and viscous secretion covering epithelial surfaces. These glycoproteins play important roles in the protection of the epithelium and are implicated in epithelial renewal and differentiation. Regulates cellular behavior through both anti-adhesive effects on cell-cell and cell-extracellular matrix interactions and its ability to act as an intramembrane ligand for ERBB2. Plays an important role in proliferation and differentiation of epithelial cells by inducing specific phosphorylation of ERBB2. In polarized epithelial cells, segregates ERBB2 and other ERBB receptors and prevents ERBB2 from acting as a coreceptor. The interaction with ERBB2 leads to enhanced expression of CDKN1B. The formation of a MUC4-ERBB2-ERBB3-NRG1 complex leads to down-regulation of CDKN1B, resulting in repression of apoptosis and stimulation of proliferation. Its ability to promote tumor growth may be mainly due to repression of apoptosis as opposed to proliferation. This Homo sapiens (Human) protein is Mucin-4 (MUC4).